The following is a 160-amino-acid chain: Cytochrome b6-f complex subunit 4 (160 aa).

Transmembrane regions (helical) follow at residues 36 to 56 (LLYVFPVVIIGTFACSIGLAI), 95 to 115 (LLGVLSMAAVPAGLLTVPFIE), and 131 to 151 (TVFLIGTVVSIWLGIGATMPI).

The protein belongs to the cytochrome b family. PetD subfamily. The 4 large subunits of the cytochrome b6-f complex are cytochrome b6, subunit IV (17 kDa polypeptide, petD), cytochrome f and the Rieske protein, while the 4 small subunits are petG, petL, petM and petN. The complex functions as a dimer.

The protein localises to the plastid. It is found in the chloroplast thylakoid membrane. In terms of biological role, component of the cytochrome b6-f complex, which mediates electron transfer between photosystem II (PSII) and photosystem I (PSI), cyclic electron flow around PSI, and state transitions. The protein is Cytochrome b6-f complex subunit 4 of Pyropia yezoensis (Susabi-nori).